The primary structure comprises 452 residues: tRNA modification GTPase MnmE (452 aa).

Residues Arg21, Glu78, and Lys118 each contribute to the (6S)-5-formyl-5,6,7,8-tetrahydrofolate site. The TrmE-type G domain maps to 214-375 (GMKVVIAGRP…LREHLKQAMG (162 aa)). Residue Asn224 participates in K(+) binding. GTP contacts are provided by residues 224–229 (NAGKSS), 243–249 (TDIAGTT), and 268–271 (DTAG). Position 228 (Ser228) interacts with Mg(2+). 3 residues coordinate K(+): Thr243, Ile245, and Thr248. Thr249 provides a ligand contact to Mg(2+). (6S)-5-formyl-5,6,7,8-tetrahydrofolate is bound at residue Lys452.

This sequence belongs to the TRAFAC class TrmE-Era-EngA-EngB-Septin-like GTPase superfamily. TrmE GTPase family. In terms of assembly, homodimer. Heterotetramer of two MnmE and two MnmG subunits. The cofactor is K(+).

The protein localises to the cytoplasm. In terms of biological role, exhibits a very high intrinsic GTPase hydrolysis rate. Involved in the addition of a carboxymethylaminomethyl (cmnm) group at the wobble position (U34) of certain tRNAs, forming tRNA-cmnm(5)s(2)U34. This is tRNA modification GTPase MnmE from Haemophilus influenzae (strain PittEE).